We begin with the raw amino-acid sequence, 367 residues long: Undecaprenyl-phosphate alpha-N-acetylglucosaminyl 1-phosphate transferase (367 aa).

10 consecutive transmembrane segments (helical) span residues 3–23 (LLTV…FLFF), 46–66 (LIPL…FGIV), 69–89 (YIPH…IGAL), 132–152 (VLGP…INAF), 158–178 (IDGL…MILW), 187–207 (IWCF…LGIL), 213–233 (VFMG…ILLE), 242–262 (ISPV…VAIM), 294–314 (AFVL…LAEY), and 318–338 (VPEW…GYCI).

It belongs to the glycosyltransferase 4 family. WecA subfamily. It depends on Mg(2+) as a cofactor. Mn(2+) is required as a cofactor.

It is found in the cell inner membrane. It catalyses the reaction di-trans,octa-cis-undecaprenyl phosphate + UDP-N-acetyl-alpha-D-glucosamine = N-acetyl-alpha-D-glucosaminyl-di-trans,octa-cis-undecaprenyl diphosphate + UMP. It participates in bacterial outer membrane biogenesis; LPS O-antigen biosynthesis. It functions in the pathway bacterial outer membrane biogenesis; enterobacterial common antigen biosynthesis. Catalyzes the transfer of the GlcNAc-1-phosphate moiety from UDP-GlcNAc onto the carrier lipid undecaprenyl phosphate (C55-P), yielding GlcNAc-pyrophosphoryl-undecaprenyl (GlcNAc-PP-C55). The sequence is that of Undecaprenyl-phosphate alpha-N-acetylglucosaminyl 1-phosphate transferase from Escherichia coli O6:H1 (strain CFT073 / ATCC 700928 / UPEC).